The chain runs to 748 residues: NAD(P)H-quinone oxidoreductase subunit 5, chloroplastic (748 aa).

16 helical membrane passes run 9-29 (WIIP…LLLV), 40-60 (WAFP…DLSI), 89-109 (IDPL…MVLV), 121-140 (YLRF…GLVT), 147-167 (IYIF…FWFT), 185-205 (GDFG…SFEF), 224-244 (LFVT…SAQF), 258-278 (TPIS…FLVA), 280-300 (LFPL…IGII), 327-347 (LGYT…FHLI), 354-374 (ALLF…VGYS), 396-416 (TAFL…CFWS), 425-445 (WLYS…TAFY), 551-571 (LLPL…GIPF), 605-625 (FITN…IASL), and 726-746 (YLFL…FLFL).

This sequence belongs to the complex I subunit 5 family. In terms of assembly, NDH is composed of at least 16 different subunits, 5 of which are encoded in the nucleus.

Its subcellular location is the plastid. The protein localises to the chloroplast thylakoid membrane. The enzyme catalyses a plastoquinone + NADH + (n+1) H(+)(in) = a plastoquinol + NAD(+) + n H(+)(out). It catalyses the reaction a plastoquinone + NADPH + (n+1) H(+)(in) = a plastoquinol + NADP(+) + n H(+)(out). Its function is as follows. NDH shuttles electrons from NAD(P)H:plastoquinone, via FMN and iron-sulfur (Fe-S) centers, to quinones in the photosynthetic chain and possibly in a chloroplast respiratory chain. The immediate electron acceptor for the enzyme in this species is believed to be plastoquinone. Couples the redox reaction to proton translocation, and thus conserves the redox energy in a proton gradient. The protein is NAD(P)H-quinone oxidoreductase subunit 5, chloroplastic (ndhF) of Platanus occidentalis (Sycamore).